A 295-amino-acid chain; its full sequence is Small ribosomal subunit protein uS2 (295 aa).

A disordered region spans residues 263-295 (KKFSKTKNIDEETNTEFEQALNDADENKNSDNA).

This sequence belongs to the universal ribosomal protein uS2 family.

The chain is Small ribosomal subunit protein uS2 from Rickettsia massiliae (strain Mtu5).